Reading from the N-terminus, the 166-residue chain is Interferon gamma (166 aa).

The N-terminal stretch at 1–23 is a signal peptide; it reads MKYTSYFLALLLCVLLGFSGSYG. Gln24 is subject to Pyrrolidone carboxylic acid. N-linked (GlcNAc...) asparagine glycosylation is found at Asn39 and Asn106.

The protein belongs to the type II (or gamma) interferon family. As to quaternary structure, homodimer. Interacts with IFNGR1 (via extracellular domain); this interaction promotes IFNGR1 dimerization. As to expression, released primarily from activated T lymphocytes.

The protein localises to the secreted. Type II interferon produced by immune cells such as T-cells and NK cells that plays crucial roles in antimicrobial, antiviral, and antitumor responses by activating effector immune cells and enhancing antigen presentation. Primarily signals through the JAK-STAT pathway after interaction with its receptor IFNGR1 to affect gene regulation. Upon IFNG binding, IFNGR1 intracellular domain opens out to allow association of downstream signaling components JAK2, JAK1 and STAT1, leading to STAT1 activation, nuclear translocation and transcription of IFNG-regulated genes. Many of the induced genes are transcription factors such as IRF1 that are able to further drive regulation of a next wave of transcription. Plays a role in class I antigen presentation pathway by inducing a replacement of catalytic proteasome subunits with immunoproteasome subunits. In turn, increases the quantity, quality, and repertoire of peptides for class I MHC loading. Increases the efficiency of peptide generation also by inducing the expression of activator PA28 that associates with the proteasome and alters its proteolytic cleavage preference. Up-regulates as well MHC II complexes on the cell surface by promoting expression of several key molecules such as cathepsins B/CTSB, H/CTSH, and L/CTSL. Participates in the regulation of hematopoietic stem cells during development and under homeostatic conditions by affecting their development, quiescence, and differentiation. The polypeptide is Interferon gamma (IFNG) (Bubalus carabanensis (Swamp type water buffalo)).